Reading from the N-terminus, the 295-residue chain is 33 kDa chaperonin (295 aa).

2 disulfide bridges follow: C237-C239 and C270-C273.

This sequence belongs to the HSP33 family. In terms of processing, under oxidizing conditions two disulfide bonds are formed involving the reactive cysteines. Under reducing conditions zinc is bound to the reactive cysteines and the protein is inactive.

The protein resides in the cytoplasm. Its function is as follows. Redox regulated molecular chaperone. Protects both thermally unfolding and oxidatively damaged proteins from irreversible aggregation. Plays an important role in the bacterial defense system toward oxidative stress. The polypeptide is 33 kDa chaperonin (Symbiobacterium thermophilum (strain DSM 24528 / JCM 14929 / IAM 14863 / T)).